Consider the following 122-residue polypeptide: NADH-quinone oxidoreductase subunit A (122 aa).

3 helical membrane-spanning segments follow: residues 12 to 32 (IIIF…VNLI), 66 to 86 (LVAI…PWAI), and 91 to 111 (IGGL…VGFI).

Belongs to the complex I subunit 3 family. NDH-1 is composed of 14 different subunits. Subunits NuoA, H, J, K, L, M, N constitute the membrane sector of the complex.

The protein resides in the cell inner membrane. The catalysed reaction is a quinone + NADH + 5 H(+)(in) = a quinol + NAD(+) + 4 H(+)(out). NDH-1 shuttles electrons from NADH, via FMN and iron-sulfur (Fe-S) centers, to quinones in the respiratory chain. The immediate electron acceptor for the enzyme in this species is believed to be ubiquinone. Couples the redox reaction to proton translocation (for every two electrons transferred, four hydrogen ions are translocated across the cytoplasmic membrane), and thus conserves the redox energy in a proton gradient. This is NADH-quinone oxidoreductase subunit A from Pelagibacter ubique (strain HTCC1062).